Consider the following 37-residue polypeptide: Large ribosomal subunit protein bL36c (37 aa).

The protein belongs to the bacterial ribosomal protein bL36 family.

The protein resides in the plastid. It localises to the chloroplast. The polypeptide is Large ribosomal subunit protein bL36c (Stigeoclonium helveticum (Green alga)).